A 233-amino-acid polypeptide reads, in one-letter code: Large ribosomal subunit protein uL1 (233 aa).

Belongs to the universal ribosomal protein uL1 family. As to quaternary structure, part of the 50S ribosomal subunit.

Binds directly to 23S rRNA. The L1 stalk is quite mobile in the ribosome, and is involved in E site tRNA release. In terms of biological role, protein L1 is also a translational repressor protein, it controls the translation of the L11 operon by binding to its mRNA. This Brucella canis (strain ATCC 23365 / NCTC 10854 / RM-666) protein is Large ribosomal subunit protein uL1.